Here is a 952-residue protein sequence, read N- to C-terminus: Isoleucine--tRNA ligase (952 aa).

The 'HIGH' region motif lies at 58–68 (PYANGDIHIGH). Glu576 contacts L-isoleucyl-5'-AMP. The short motif at 617–621 (KMSKS) is the 'KMSKS' region element. Lys620 serves as a coordination point for ATP. The Zn(2+) site is built by Cys915, Cys918, Cys935, and Cys938.

Belongs to the class-I aminoacyl-tRNA synthetase family. IleS type 1 subfamily. As to quaternary structure, monomer. The cofactor is Zn(2+).

The protein resides in the cytoplasm. It carries out the reaction tRNA(Ile) + L-isoleucine + ATP = L-isoleucyl-tRNA(Ile) + AMP + diphosphate. Catalyzes the attachment of isoleucine to tRNA(Ile). As IleRS can inadvertently accommodate and process structurally similar amino acids such as valine, to avoid such errors it has two additional distinct tRNA(Ile)-dependent editing activities. One activity is designated as 'pretransfer' editing and involves the hydrolysis of activated Val-AMP. The other activity is designated 'posttransfer' editing and involves deacylation of mischarged Val-tRNA(Ile). This is Isoleucine--tRNA ligase from Aliivibrio fischeri (strain ATCC 700601 / ES114) (Vibrio fischeri).